The following is a 360-amino-acid chain: Heat-inducible transcription repressor HrcA (360 aa).

It belongs to the HrcA family.

Functionally, negative regulator of class I heat shock genes (grpE-dnaK-dnaJ and groELS operons). Prevents heat-shock induction of these operons. The sequence is that of Heat-inducible transcription repressor HrcA from Streptococcus thermophilus (strain CNRZ 1066).